A 492-amino-acid chain; its full sequence is Cytochrome P450 26A1 (492 aa).

C437 contacts heme.

It belongs to the cytochrome P450 family. Requires heme as cofactor. Expressed primarily in ovary, brain and eyes.

The protein localises to the endoplasmic reticulum membrane. It localises to the microsome membrane. The catalysed reaction is all-trans-retinoate + reduced [NADPH--hemoprotein reductase] + O2 = all-trans-(4S)-hydroxyretinoate + oxidized [NADPH--hemoprotein reductase] + H2O + H(+). A cytochrome P450 monooxygenase involved in the metabolism of all-trans retinoic acid (atRA), a signaling molecule that binds to retinoic acid receptors and regulates gene transcription. May regulate at-RA signaling during hindbrain development. Mechanistically, uses molecular oxygen inserting one oxygen atom into a substrate, and reducing the second into a water molecule, with two electrons provided by NADPH via cytochrome P450 reductase (CPR; NADPH-ferrihemoprotein reductase). Catalyzes the hydroxylation of carbon hydrogen bonds of atRA primarily at C-4. Has no activity toward 9-cis and 13-cis retinoic acid stereoisomers. May play a role in the oxidative metabolism of xenobiotics such as tazarotenic acid. The protein is Cytochrome P450 26A1 (cyp26a1) of Xenopus laevis (African clawed frog).